The primary structure comprises 513 residues: MAAPIWMASPPEVHSALLSNGPGPGSLVAAATAWSQLSAEYASTAAELSGLLGAVPGWAWQGPSAEWYVAAHLPYVAWLTQASADAAGAAAQHEAAAAAYTTALAAMPTLAELAANHVIHTVLVATNFFGINTIPITLNEADYVRMWLQAAAVMGLYQAASGAALASAPRTVPAPTVMNPGGGAASTVGAVNPWQWLLALLQQLWNAYTGFYGWMLQLIWQFLQDPIGNSIKIIIAFLTNPIQALITYGPLLFALGYQIFFNLVGWPTWGMILSSPFLLPAGLGLGLAAIAFLPIVLAPAVIPPASTPLAAAAVAAGSVWPAVSMAVTGAGTAGAATPAAGAAPSAGAAPAPAAPATASFAYAVGGSGDWGPSLGPTVGGRGGIKAPAATVPAAAAAAATRGQSRARRRRRSELRDYGDEFLDMDSDSGFGPSTGDHGAQASERGAGTLGFAGTATKERRVRAVGLTALAGDEFGNGPRMPMVPGTWEQGSNEPEAPDGSGRGGGDGLPHDSK.

The next 3 membrane-spanning stretches (helical) occupy residues 233 to 253 (IIIAFLTNPIQALITYGPLLF), 277 to 297 (FLLPAGLGLGLAAIAFLPIVL), and 309 to 329 (LAAAAVAAGSVWPAVSMAVTG). 2 disordered regions span residues 395-446 (AAAA…ERGA) and 469-513 (LAGD…HDSK).

This sequence belongs to the mycobacterial PPE family.

It is found in the cell membrane. In terms of biological role, important for the siderophore-mediated iron-acquisition function of ESX-3. The sequence is that of PPE family protein PPE4 (PPE4) from Mycobacterium tuberculosis (strain CDC 1551 / Oshkosh).